The chain runs to 233 residues: Thrombin-like enzyme elegaxobin-1 (233 aa).

One can recognise a Peptidase S1 domain in the interval 1–224 (VIGGDECNIN…HLDWIKGIIA (224 aa)). 6 cysteine pairs are disulfide-bonded: cysteine 7–cysteine 138, cysteine 25–cysteine 41, cysteine 73–cysteine 231, cysteine 117–cysteine 185, cysteine 149–cysteine 164, and cysteine 175–cysteine 200. Catalysis depends on charge relay system residues histidine 40 and aspartate 85. Serine 179 serves as the catalytic Charge relay system.

This sequence belongs to the peptidase S1 family. Snake venom subfamily. As to quaternary structure, monomer. In terms of tissue distribution, expressed by the venom gland.

It is found in the secreted. Thrombin-like snake venom serine protease that clots rabbit fibrinogen. Only the beta chain of fibrinogen (FGB) is cleaved, releasing fibrinopeptide B. Incubation with human fibrinogen alpha and beta resulted in cleavage of both fibrinogen chains but generated neither fibrinopeptide A nor fibrinopeptide B. Promotes clotting of rabbit fibrinogen, but not bovine or human fibrinogen. This is Thrombin-like enzyme elegaxobin-1 from Protobothrops elegans (Elegant pitviper).